We begin with the raw amino-acid sequence, 983 residues long: Receptor-type tyrosine-protein phosphatase-like N (983 aa).

The N-terminal stretch at 1-40 (MRRPRRPGGPAGCGGSEGSGGLRLLVCLLLLSGRPGGCSA) is a signal peptide. The tract at residues 41-137 (ISAHGCLFDR…HPRDRSGSVP (97 aa)) is RESP18 homology domain. Residues 41–579 (ISAHGCLFDR…RQAHGISPMR (539 aa)) lie on the Lumenal side of the membrane. A disulfide bridge links cysteine 59 with cysteine 68. Over residues 118 to 133 (RIPRLRPPEPHPRDRS) the composition is skewed to basic and acidic residues. Disordered stretches follow at residues 118 to 179 (RIPR…SPLS), 293 to 330 (RARA…SPPQ), and 399 to 420 (GDTA…ASST). A compositionally biased stretch (polar residues) spans 148-158 (SQGNPTGSSPA). Residues 307-326 (RAEDSSEGHEEEVLGGHGEK) are compositionally biased toward basic and acidic residues. 2 positions are modified to phosphoserine: serine 311 and serine 312. The tract at residues 453–579 (SPLGQSQPTV…RQAHGISPMR (127 aa)) is sufficient for dimerization of proICA512. 2 N-linked (GlcNAc...) asparagine glycosylation sites follow: asparagine 510 and asparagine 528. The helical transmembrane segment at 580–604 (SLLLTLVALAGVAGLLVALAVALCM) threads the bilayer. Residues 605–736 (RHHSKQRDKE…PNTCATAQGE (132 aa)) form a sufficient for dimerization of proICA512 region. Residues 605–983 (RHHSKQRDKE…VNAILKALPQ (379 aa)) lie on the Cytoplasmic side of the membrane. The disordered stretch occupies residues 648-684 (RAEGQPEPSRVSSVSSQFSDAAQASPSSHSSTPSWCE). Over residues 652 to 681 (QPEPSRVSSVSSQFSDAAQASPSSHSSTPS) the composition is skewed to low complexity. Positions 713 to 973 (LAKEWQALCA…EFALTAVAEE (261 aa)) constitute a Tyrosine-protein phosphatase domain. Lysine 758 participates in a covalent cross-link: Glycyl lysine isopeptide (Lys-Gly) (interchain with G-Cter in SUMO).

Belongs to the protein-tyrosine phosphatase family. Receptor class 8 subfamily. As to quaternary structure, homodimer; shown for the unprocessed protein (proICA512) in the endoplasmic reticulum and resolved during protein maturation as ICA512-TMF seems to be predominantly monomeric in secretory granules; however, ICA512-CCF interacts with ICA512-TMF disrupting the ICA512-TMF:SNTB2 complex. The isolated lumenal RESP18 homology domain has been shown to form disulfide-linked homooligomers. Interacts (via cytoplasmic domain) with phosphorylated SNTB2; this protects PTPRN against cleavage by CAPN1 to produce ICA512-CCF. Dephosphorylation of SNTB2 upon insulin stimulation disrupts the interaction and results in PTPRN cleavage. Interacts with SNX19. ICA512-CCF interacts with PIAS4; in the nucleus. Interacts with STAT5B (phosphorylated); down-regulated by ICA512-CCF sumoylation; ICA512-CCF prevents STAT5B dephosphorylation; ICA512-CCF mediates interaction of STAT5B with PIAS4. Interacts (via RESP18 homology domain) with insulin and proinsulin. Interacts with PTPRN2, PTPRA and PTPRE. In terms of processing, subject to proteolytic cleavage at multiple sites. Subject to cleavage on a pair of basic residues. Following exocytosis of secretory granules in pancreatic beta-cells ICA512-TMF located in the plasma-membrane is cleaved by mu-type calpain CPN1 to yield ICA512-CCF. N-glycosylated. Post-translationally, O-glycosylated. In terms of processing, sumoylated at two sites including Lys-758. Sumoylation decreases interaction with STAT5. As to expression, detected in pancreas islets. Detected in pancreas alpha, beta and delta cells, and in chromaffin cells in the adrenal medulla. Detected in amygdala, hypothalamus, autonomous nerve fibers and ganglia, especially at synaptic contacts. Detected in pituitary (at protein level). Detected in brain, specifically in cerebral cortex, diencephalon and brain stem.

The protein resides in the membrane. The protein localises to the cytoplasmic vesicle. It is found in the secretory vesicle membrane. Its subcellular location is the perikaryon. It localises to the cell projection. The protein resides in the axon. The protein localises to the synapse. It is found in the cell membrane. Its subcellular location is the endosome. It localises to the nucleus. In terms of biological role, plays a role in vesicle-mediated secretory processes. Required for normal accumulation of secretory vesicles in hippocampus, pituitary and pancreatic islets. Required for the accumulation of normal levels of insulin-containing vesicles and preventing their degradation. Plays a role in insulin secretion in response to glucose stimuli. Required for normal accumulation of the neurotransmitters norepinephrine, dopamine and serotonin in the brain. In females, but not in males, required for normal accumulation and secretion of pituitary hormones, such as luteinizing hormone (LH) and follicle-stimulating hormone (FSH). Required to maintain normal levels of renin expression and renin release. Seems to lack intrinsic enzyme activity. Its function is as follows. ICA512-TMF regulates dynamics and exocytosis of insulin secretory granules (SGs); binding of ICA512-TMF to SNTB2/beta-2-syntrophin is proposed to restrain SGs mobility and exocytosis by tethering them to the actin cytoskeleton depending on UTRN; the function is inhibited by cytoplasmic ICA512-CFF dimerizing with ICA512-TMF and displacing SNTB2. Functionally, ICA512-CCF translocated to the nucleus promotes expression of insulin and other granule-related genes; the function implicates binding to and regulating activity of STAT5B probably by preventing its dephosphorylation and potentially by inducing its sumoylation by recruiting PIAS4. Enhances pancreatic beta-cell proliferation by converging with signaling by STAT5B and STAT3. ICA512-CCF located in the cytoplasm regulates dynamics and exocytosis of insulin secretory granules (SGs) by dimerizing with ICA512-TMF and displacing SNTB2 thus enhancing SGs mobility and exocytosis. This chain is Receptor-type tyrosine-protein phosphatase-like N (Ptprn), found in Rattus norvegicus (Rat).